A 138-amino-acid chain; its full sequence is Large ribosomal subunit protein uL16 (138 aa).

Residues 1-13 (MLQPKRRKYRKEQ) are compositionally biased toward basic residues. A disordered region spans residues 1-20 (MLQPKRRKYRKEQKGRNTGI).

It belongs to the universal ribosomal protein uL16 family. In terms of assembly, part of the 50S ribosomal subunit.

Binds 23S rRNA and is also seen to make contacts with the A and possibly P site tRNAs. In Ralstonia nicotianae (strain ATCC BAA-1114 / GMI1000) (Ralstonia solanacearum), this protein is Large ribosomal subunit protein uL16.